Here is a 305-residue protein sequence, read N- to C-terminus: Autophagy-related protein 14 (305 aa).

The stretch at 34-147 forms a coiled coil; that stretch reads KMNLLILRQE…LDTLSHILAR (114 aa).

The protein belongs to the ATG14 family. As to quaternary structure, component of the autophagy-specific VPS34 PI3-kinase complex I.

It is found in the preautophagosomal structure membrane. It localises to the vacuole membrane. Its function is as follows. Required for cytoplasm to vacuole transport (Cvt) and autophagy as a part of the autophagy-specific VPS34 PI3-kinase complex I. This complex is essential to recruit the ATG8-phosphatidylinositol conjugate and the ATG12-ATG5 conjugate to the pre-autophagosomal structure. ATG14 mediates the specific binding of the VPS34 PI3-kinase complex I to the preautophagosomal structure (PAS). The protein is Autophagy-related protein 14 of Kluyveromyces marxianus (strain DMKU3-1042 / BCC 29191 / NBRC 104275) (Yeast).